We begin with the raw amino-acid sequence, 666 residues long: MSSPFAPIITADIDWRDDLPYSLQFDDIYYSAEGGINQSLYVFVEGNNLINRWQQLPTNESNVFTIAETGFGTGMNFLLTWKLWEKFAPQNARLHYISCDKHPLKKNDLIKCLQKWPELSVQAEKLIEHYPVLTPGYHHLAFSNNQITLTLMLGDVLECYEQLLFCGDINLEQQLRESYVNAWYLDGFSPSKNQSMWSDNLLTVIAMLSKEGTTVATYSASSIVKTALTNAGFVIEKRKGFGPKRHMLCAYYEKAYSSSKKNRHTPWHINYPVTKDERTALIVGGGLAGCFIANSLAKRGWEVTILEEKEKVGCGGSANQQAVLFPKLSTYKSPFTQFMLYSFLYANDVYKELLKHYDLGELKGSLLLAHNEREKANQQSLIHWLELYPELGQLVDEKQSSELSGISLPCGGLFIPSSGWINSPELCDILIDNKRISLITGNRVQSINYNQKNWVVNDIEASVLILANGQQVNYFHETNHLPVKAIRGQITTIQSTQESTKLKIPLCAEGHVLPALNNSHRVGASYDIGTSEPELNALDDQLNLDRLKRIAPDIMWSQNVLDHWAGIRAASPDYLPIVGPLPNALEFKEVYSELKSNSKRWIAEAAPCYPNLYVCAAFGSRGLTTIPLATEWLAGLINKEISILPRKLIQAISPARFLRKKIIQGP.

A tRNA (mnm(5)s(2)U34)-methyltransferase region spans residues 1–253 (MSSPFAPIIT…KRHMLCAYYE (253 aa)). An FAD-dependent cmnm(5)s(2)U34 oxidoreductase region spans residues 283 to 666 (VGGGLAGCFI…FLRKKIIQGP (384 aa)).

In the N-terminal section; belongs to the methyltransferase superfamily. tRNA (mnm(5)s(2)U34)-methyltransferase family. It in the C-terminal section; belongs to the DAO family. It depends on FAD as a cofactor.

It localises to the cytoplasm. It carries out the reaction 5-aminomethyl-2-thiouridine(34) in tRNA + S-adenosyl-L-methionine = 5-methylaminomethyl-2-thiouridine(34) in tRNA + S-adenosyl-L-homocysteine + H(+). Its function is as follows. Catalyzes the last two steps in the biosynthesis of 5-methylaminomethyl-2-thiouridine (mnm(5)s(2)U) at the wobble position (U34) in tRNA. Catalyzes the FAD-dependent demodification of cmnm(5)s(2)U34 to nm(5)s(2)U34, followed by the transfer of a methyl group from S-adenosyl-L-methionine to nm(5)s(2)U34, to form mnm(5)s(2)U34. The chain is tRNA 5-methylaminomethyl-2-thiouridine biosynthesis bifunctional protein MnmC from Legionella pneumophila (strain Corby).